The primary structure comprises 188 residues: Apolipoprotein M (188 aa).

A signal peptide (not cleaved) is located at residues 1-22; it reads MFHQIWAALLYFYGIILNSIYQ. Disulfide bonds link cysteine 23–cysteine 167, cysteine 95–cysteine 183, and cysteine 128–cysteine 157. An N-linked (GlcNAc...) asparagine glycan is attached at asparagine 135. The tetradecanoate site is built by glutamate 136 and arginine 143.

Belongs to the calycin superfamily. Lipocalin family. Highly divergent. As to quaternary structure, interacts with LRP2; LRP2 mediates APOM renal uptake and subsequent lysosomal degradation. Plasma protein. Expressed in liver and kidney.

It is found in the secreted. Its function is as follows. Probably involved in lipid transport. Can bind sphingosine-1-phosphate, myristic acid, palmitic acid and stearic acid, retinol, all-trans-retinoic acid and 9-cis-retinoic acid. The sequence is that of Apolipoprotein M (APOM) from Homo sapiens (Human).